We begin with the raw amino-acid sequence, 249 residues long: Triosephosphate isomerase (249 aa).

The substrate site is built by asparagine 12 and lysine 14. Lysine 14 bears the N6-acetyllysine mark. Tyrosine 68 is subject to 3'-nitrotyrosine. Residue serine 80 is modified to Phosphoserine. Catalysis depends on histidine 96, which acts as the Electrophile. Serine 106 is modified (phosphoserine). Lysine 142 participates in a covalent cross-link: Glycyl lysine isopeptide (Lys-Gly) (interchain with G-Cter in SUMO1). An N6-succinyllysine modification is found at lysine 149. At lysine 156 the chain carries N6-acetyllysine; alternate. N6-succinyllysine; alternate is present on lysine 156. The active-site Proton acceptor is the glutamate 166. Threonine 173 is subject to Phosphothreonine. Lysine 194 carries the post-translational modification N6-acetyllysine; alternate. Residue lysine 194 is modified to N6-succinyllysine; alternate. Lysine 194 bears the N6-methyllysine; alternate mark. Serine 198 is modified (phosphoserine). A 3'-nitrotyrosine modification is found at tyrosine 209. Position 212 is a phosphoserine (serine 212). Residue threonine 214 is modified to Phosphothreonine. Serine 223 is modified (phosphoserine). Position 238 is an N6-acetyllysine (lysine 238).

Belongs to the triosephosphate isomerase family. As to quaternary structure, homodimer.

The protein resides in the cytoplasm. The enzyme catalyses dihydroxyacetone phosphate = methylglyoxal + phosphate. The catalysed reaction is D-glyceraldehyde 3-phosphate = dihydroxyacetone phosphate. Its pathway is carbohydrate degradation; glycolysis; D-glyceraldehyde 3-phosphate from glycerone phosphate: step 1/1. It participates in carbohydrate biosynthesis; gluconeogenesis. Triosephosphate isomerase is an extremely efficient metabolic enzyme that catalyzes the interconversion between dihydroxyacetone phosphate (DHAP) and D-glyceraldehyde-3-phosphate (G3P) in glycolysis and gluconeogenesis. In terms of biological role, it is also responsible for the non-negligible production of methylglyoxal a reactive cytotoxic side-product that modifies and can alter proteins, DNA and lipids. The chain is Triosephosphate isomerase (Tpi1) from Rattus norvegicus (Rat).